Here is a 183-residue protein sequence, read N- to C-terminus: Apo-citrate lyase phosphoribosyl-dephospho-CoA transferase (183 aa).

This sequence belongs to the CitX family.

The enzyme catalyses apo-[citrate lyase ACP] + 2'-(5''-triphospho-alpha-D-ribosyl)-3'-dephospho-CoA = holo-[citrate lyase ACP] + diphosphate. Functionally, transfers 2-(5''-triphosphoribosyl)-3'-dephosphocoenzyme-A on a serine residue to the apo-acyl carrier protein (gamma chain) of the citrate lyase to yield holo-acyl carrier protein. The protein is Apo-citrate lyase phosphoribosyl-dephospho-CoA transferase of Escherichia coli O45:K1 (strain S88 / ExPEC).